A 646-amino-acid polypeptide reads, in one-letter code: Anoctamin-10 (646 aa).

The next 8 membrane-spanning stretches (helical) occupy residues Leu-210–Ile-230, Asp-241–Trp-261, Ile-314–Met-334, Val-357–Tyr-377, Val-404–Gln-424, Phe-502–Val-522, Leu-557–Ser-577, and Ile-592–Val-612.

It belongs to the anoctamin family.

The protein localises to the membrane. Functionally, does not exhibit calcium-activated chloride channel (CaCC) activity. Can inhibit the activity of ANO1. This chain is Anoctamin-10 (ano10), found in Danio rerio (Zebrafish).